The primary structure comprises 431 residues: Glutamate-1-semialdehyde 2,1-aminomutase (431 aa).

Lysine 269 is subject to N6-(pyridoxal phosphate)lysine.

The protein belongs to the class-III pyridoxal-phosphate-dependent aminotransferase family. HemL subfamily. In terms of assembly, homodimer. Requires pyridoxal 5'-phosphate as cofactor.

It is found in the cytoplasm. The enzyme catalyses (S)-4-amino-5-oxopentanoate = 5-aminolevulinate. Its pathway is porphyrin-containing compound metabolism; protoporphyrin-IX biosynthesis; 5-aminolevulinate from L-glutamyl-tRNA(Glu): step 2/2. The polypeptide is Glutamate-1-semialdehyde 2,1-aminomutase (Francisella tularensis subsp. holarctica (strain LVS)).